Here is a 492-residue protein sequence, read N- to C-terminus: Catalase isozyme 2 (492 aa).

Active-site residues include H65 and N138. Y347 is a binding site for heme.

The protein belongs to the catalase family. In terms of assembly, homotetramer. The cofactor is heme. As to expression, high levels in green cotyledons, mature leaf, stem and green hypocotyl.

Its subcellular location is the peroxisome. The enzyme catalyses 2 H2O2 = O2 + 2 H2O. Occurs in almost all aerobically respiring organisms and serves to protect cells from the toxic effects of hydrogen peroxide. The polypeptide is Catalase isozyme 2 (CAT2) (Cucurbita pepo (Vegetable marrow)).